Reading from the N-terminus, the 339-residue chain is NADH-quinone oxidoreductase subunit H (339 aa).

9 helical membrane-spanning segments follow: residues 9–29 (IFPL…LILC), 50–70 (PNVV…KLLF), 82–102 (ILFI…WAVI), 115–135 (VGVL…IIAG), 161–181 (MGLV…SEII), 187–207 (MPWW…ISVL), 235–255 (MGFA…SAMT), 275–295 (IPGF…FLWI), and 311–331 (GWKV…SVLV).

It belongs to the complex I subunit 1 family. As to quaternary structure, NDH-1 is composed of 14 different subunits. Subunits NuoA, H, J, K, L, M, N constitute the membrane sector of the complex.

The protein resides in the cell membrane. The catalysed reaction is a quinone + NADH + 5 H(+)(in) = a quinol + NAD(+) + 4 H(+)(out). Its function is as follows. NDH-1 shuttles electrons from NADH, via FMN and iron-sulfur (Fe-S) centers, to quinones in the respiratory chain. The immediate electron acceptor for the enzyme in this species is believed to be ubiquinone. Couples the redox reaction to proton translocation (for every two electrons transferred, four hydrogen ions are translocated across the cytoplasmic membrane), and thus conserves the redox energy in a proton gradient. This subunit may bind ubiquinone. This is NADH-quinone oxidoreductase subunit H from Rickettsia africae (strain ESF-5).